Here is a 443-residue protein sequence, read N- to C-terminus: Phosphoglucosamine mutase (443 aa).

The Phosphoserine intermediate role is filled by Ser-100. Residues Ser-100, Asp-239, Asp-241, and Asp-243 each contribute to the Mg(2+) site. Ser-100 is subject to Phosphoserine.

Belongs to the phosphohexose mutase family. Mg(2+) serves as cofactor. In terms of processing, activated by phosphorylation.

The enzyme catalyses alpha-D-glucosamine 1-phosphate = D-glucosamine 6-phosphate. In terms of biological role, catalyzes the conversion of glucosamine-6-phosphate to glucosamine-1-phosphate. The sequence is that of Phosphoglucosamine mutase from Shewanella sediminis (strain HAW-EB3).